The sequence spans 301 residues: Transmembrane protein 178A (301 aa).

Residues 1–25 form the signal peptide; that stretch reads MEKRALVTAISLSMSLLALMLLVTA. Residues 26 to 183 lie on the Extracellular side of the membrane; that stretch reads IFTDHWYETD…LLHLRRITAG (158 aa). The N-linked (GlcNAc...) asparagine glycan is linked to N162. The chain crosses the membrane as a helical span at residues 184 to 204; that stretch reads FLGMAAAVMLCGSIVAAVGFF. Residues 205–215 lie on the Cytoplasmic side of the membrane; sequence WEESLTQHVSG. The helical transmembrane segment at 216-236 threads the bilayer; sequence LLFLMAGIFCTISLCTYAASV. The Extracellular segment spans residues 237 to 258; that stretch reads SYDLSRNPPFIYGLPSDVDHGY. A helical transmembrane segment spans residues 259-279; it reads GWSIFCAWVSLGLTVASGCIC. Residues 280–301 lie on the Cytoplasmic side of the membrane; the sequence is TTYPFLSRTKALRSKTARESSV.

It belongs to the TMEM178 family.

The protein resides in the endoplasmic reticulum membrane. Functionally, may act as a negative regulator of osteoclast differentiation. The chain is Transmembrane protein 178A (tmem178a) from Danio rerio (Zebrafish).